Consider the following 300-residue polypeptide: Glutamyl-Q tRNA(Asp) synthetase (300 aa).

Residues Arg-14–Thr-18 and Glu-50 each bind L-glutamate. Residues Pro-17–Ser-27 carry the 'HIGH' region motif. Cys-106, Cys-108, Tyr-120, and Cys-124 together coordinate Zn(2+). L-glutamate is bound by residues Tyr-177 and Arg-195. The 'KMSKS' region motif lies at Lys-233–Ser-237. Lys-236 is an ATP binding site.

This sequence belongs to the class-I aminoacyl-tRNA synthetase family. GluQ subfamily. Zn(2+) is required as a cofactor.

Functionally, catalyzes the tRNA-independent activation of glutamate in presence of ATP and the subsequent transfer of glutamate onto a tRNA(Asp). Glutamate is transferred on the 2-amino-5-(4,5-dihydroxy-2-cyclopenten-1-yl) moiety of the queuosine in the wobble position of the QUC anticodon. This chain is Glutamyl-Q tRNA(Asp) synthetase, found in Pseudomonas putida (strain ATCC 47054 / DSM 6125 / CFBP 8728 / NCIMB 11950 / KT2440).